We begin with the raw amino-acid sequence, 73 residues long: MSAETASGPTEDQVEILEYNFNKVDKHPDSTTLCLIAAEAGLSEEETQKWFKQRLAKWRRSEGLPSECRSVTD.

The segment at residues 3–62 (AETASGPTEDQVEILEYNFNKVDKHPDSTTLCLIAAEAGLSEEETQKWFKQRLAKWRRSE) is a DNA-binding region (homeobox; degenerate).

Interacts with serum response factor (SRF). Component of a large complex containing histone deacetylases such as HDAC2. Interacts with the acetylated forms of HSPA1A and HSPA1B. Interacts with HSPA8. Widely expressed. Expressed in the heart, brain, placenta, lung, skeletal and smooth muscles, uterus, urinary bladder, kidney and spleen. Down-regulated in some types of cancer such as lung cancer, choriocarcinoma, head and neck squamous cell carcinoma and oral squamous cell carcinoma.

The protein localises to the nucleus. It localises to the cytoplasm. Atypical homeodomain protein which does not bind DNA and is required to modulate cardiac growth and development. Acts via its interaction with SRF, thereby modulating the expression of SRF-dependent cardiac-specific genes and cardiac development. Prevents SRF-dependent transcription either by inhibiting SRF binding to DNA or by recruiting histone deacetylase (HDAC) proteins that prevent transcription by SRF. Overexpression causes cardiac hypertrophy. May act as a tumor suppressor. Acts as a co-chaperone for HSPA1A and HSPA1B chaperone proteins and assists in chaperone-mediated protein refolding. The protein is Homeodomain-only protein (HOPX) of Homo sapiens (Human).